The chain runs to 63 residues: Crotasin (63 aa).

The first 22 residues, 1–22, serve as a signal peptide directing secretion; the sequence is MKILYLLSAFLFLAFLSESGNA. Intrachain disulfides connect cysteine 26–cysteine 56, cysteine 33–cysteine 50, and cysteine 38–cysteine 57.

As to expression, highly expressed in pancreas, heart, liver, brain and kidney. Expressed to a low extent in the venom gland.

The protein localises to the secreted. The chain is Crotasin from Crotalus durissus terrificus (South American rattlesnake).